Here is a 51-residue protein sequence, read N- to C-terminus: Large ribosomal subunit protein bL33 (51 aa).

It belongs to the bacterial ribosomal protein bL33 family.

This Pseudoalteromonas translucida (strain TAC 125) protein is Large ribosomal subunit protein bL33.